We begin with the raw amino-acid sequence, 216 residues long: Vascular endothelial growth factor A (216 aa).

The N-terminal stretch at 1 to 26 is a signal peptide; the sequence is MNFLLTWIHWGLAALLYLQSAELSKA. 3 disulfide bridges follow: cysteine 52-cysteine 94, cysteine 83-cysteine 128, and cysteine 87-cysteine 130. An N-linked (GlcNAc...) asparagine glycan is attached at asparagine 101. Positions 132–141 are enriched in basic and acidic residues; the sequence is PKKDVKNKQE. Positions 132–167 are disordered; that stretch reads PKKDVKNKQEKKSKRGKGKGQKRKRKKGRYKPPSFH. Residues 142–161 are compositionally biased toward basic residues; the sequence is KKSKRGKGKGQKRKRKKGRY.

The protein belongs to the PDGF/VEGF growth factor family. As to quaternary structure, homodimer; disulfide-linked. Also found as heterodimer with PGF.

Growth factor active in angiogenesis, vasculogenesis and endothelial cell growth. Induces endothelial cell proliferation, promotes cell migration, inhibits apoptosis and induces permeabilization of blood vessels. Binds to the FLT1/VEGFR1 and KDR/VEGFR2 receptors, heparan sulfate and heparin. The polypeptide is Vascular endothelial growth factor A (VEGFA) (Gallus gallus (Chicken)).